We begin with the raw amino-acid sequence, 552 residues long: Lon protease 2 (552 aa).

97–104 (GPPGVGKT) contacts ATP. One can recognise a Lon proteolytic domain in the interval 349–535 (EPQVGIVNGL…QEVLDEILVN (187 aa)). Catalysis depends on residues serine 445 and lysine 488.

Belongs to the peptidase S16 family. Homohexamer. Organized in a ring with a central cavity.

The protein localises to the cytoplasm. It carries out the reaction Hydrolysis of proteins in presence of ATP.. ATP-dependent serine protease that mediates the selective degradation of mutant and abnormal proteins as well as certain short-lived regulatory proteins. Required for cellular homeostasis and for survival from DNA damage and developmental changes induced by stress. Degrades polypeptides processively to yield small peptide fragments that are 5 to 10 amino acids long. Binds to DNA in a double-stranded, site-specific manner. The polypeptide is Lon protease 2 (lon2) (Bacillus subtilis (strain 168)).